The primary structure comprises 311 residues: Malate dehydrogenase (311 aa).

NAD(+)-binding positions include 7-13 and Asp34; that span reads GAAGGIG. Residues Arg81 and Arg87 each contribute to the substrate site. Residues Asn94 and 117-119 contribute to the NAD(+) site; that span reads ITN. 2 residues coordinate substrate: Asn119 and Arg153. His177 (proton acceptor) is an active-site residue. NAD(+) is bound at residue Met227.

The protein belongs to the LDH/MDH superfamily. MDH type 1 family. As to quaternary structure, homodimer.

The catalysed reaction is (S)-malate + NAD(+) = oxaloacetate + NADH + H(+). In terms of biological role, catalyzes the reversible oxidation of malate to oxaloacetate. This chain is Malate dehydrogenase, found in Shewanella putrefaciens (strain CN-32 / ATCC BAA-453).